Consider the following 86-residue polypeptide: Exodeoxyribonuclease 7 small subunit (86 aa).

Residues 1-26 form a disordered region; sequence MQDELFETEKAPQKNAKNAKNAPKKS.

This sequence belongs to the XseB family. As to quaternary structure, heterooligomer composed of large and small subunits.

It localises to the cytoplasm. It catalyses the reaction Exonucleolytic cleavage in either 5'- to 3'- or 3'- to 5'-direction to yield nucleoside 5'-phosphates.. In terms of biological role, bidirectionally degrades single-stranded DNA into large acid-insoluble oligonucleotides, which are then degraded further into small acid-soluble oligonucleotides. The protein is Exodeoxyribonuclease 7 small subunit of Helicobacter pylori (strain J99 / ATCC 700824) (Campylobacter pylori J99).